The sequence spans 245 residues: Fumarate reductase iron-sulfur subunit (245 aa).

The 2Fe-2S ferredoxin-type domain occupies 17 to 98; it reads PQSAVNKPHF…NGVITLMPMP (82 aa). [2Fe-2S] cluster contacts are provided by Cys60, Cys65, Cys68, and Cys80. A 4Fe-4S ferredoxin-type domain is found at 145–174; that stretch reads AQEVFELDRCIECGCCIASCGTKLMRPNFI. 3 residues coordinate [4Fe-4S] cluster: Cys154, Cys157, and Cys160. Residues Cys164, Cys211, and Cys217 each contribute to the [3Fe-4S] cluster site. Cys221 contacts [4Fe-4S] cluster.

It belongs to the succinate dehydrogenase/fumarate reductase iron-sulfur protein family. Part of an enzyme complex containing three subunits: a flavoprotein (frdA), an iron-sulfur protein (frdB), and diheme cytochrome b (frdC). It depends on [2Fe-2S] cluster as a cofactor. [3Fe-4S] cluster serves as cofactor. [4Fe-4S] cluster is required as a cofactor.

It catalyses the reaction a menaquinone + succinate = a menaquinol + fumarate. The chain is Fumarate reductase iron-sulfur subunit (frdB) from Helicobacter pylori (strain J99 / ATCC 700824) (Campylobacter pylori J99).